The sequence spans 194 residues: 3-isopropylmalate dehydratase small subunit (194 aa).

This sequence belongs to the LeuD family. LeuD type 1 subfamily. In terms of assembly, heterodimer of LeuC and LeuD.

The enzyme catalyses (2R,3S)-3-isopropylmalate = (2S)-2-isopropylmalate. Its pathway is amino-acid biosynthesis; L-leucine biosynthesis; L-leucine from 3-methyl-2-oxobutanoate: step 2/4. Its function is as follows. Catalyzes the isomerization between 2-isopropylmalate and 3-isopropylmalate, via the formation of 2-isopropylmaleate. The sequence is that of 3-isopropylmalate dehydratase small subunit from Brevibacillus brevis (strain 47 / JCM 6285 / NBRC 100599).